Reading from the N-terminus, the 3195-residue chain is Large tegument protein deneddylase (3195 aa).

Residues 10–242 form the Peptidase C76 domain; it reads VAAASRSQFD…VEVISAALRA (233 aa). Catalysis depends on residues Cys30, Asp173, and His175. Disordered stretches follow at residues 287–374, 2407–2776, 2829–3068, and 3128–3147; these read RGTA…GALA, NPAH…DSNY, AGVG…AALD, and ASDL…APLD. The segment covering 338–347 has biased composition (basic residues); the sequence is KVKKPNKGKK. Basic and acidic residues predominate over residues 2470 to 2482; it reads KIERASGKNRKTE. Over residues 2491–2503 the composition is skewed to low complexity; that stretch reads AARGRAAAPPTET. Basic and acidic residues-rich tracts occupy residues 2504 to 2527 and 2538 to 2562; these read KTTE…RAPH and RPPR…DKAA. Basic residues-rich tracts occupy residues 2588-2615 and 2636-2648; these read PKTK…HRTH and GRQR…GKKR. 2 stretches are compositionally biased toward basic and acidic residues: residues 2649 to 2672 and 2687 to 2696; these read SGTD…KFSR and ACDRLGERGN. Pro residues predominate over residues 2701 to 2712; that stretch reads PRAPASSPPPPG. The segment covering 2714–2723 has biased composition (basic and acidic residues); it reads QADHGIDQRE. Composition is skewed to acidic residues over residues 2748 to 2768 and 2835 to 2844; these read DDGD…EEDV and WSEEDEDAPA. Residues 2850 to 2864 show a composition bias toward polar residues; it reads STNVEVATHGYTSDD. Residues 2869 to 2878 are compositionally biased toward basic and acidic residues; sequence DESKRARATR. A compositionally biased stretch (low complexity) spans 2887–2903; sequence PASPLAPSTPSSLPTPA. Over residues 2959 to 2981 the composition is skewed to basic and acidic residues; the sequence is DDARKKQENSSHERKDDGVRWEI. The segment covering 2982–2994 has biased composition (acidic residues); sequence DLDSDQGDYSDAS. Composition is skewed to basic and acidic residues over residues 2995–3021, 3050–3062, and 3131–3140; these read DDCK…KSES, SDDK…DPKL, and LDDHQSDQPR.

The protein belongs to the herpesviridae large tegument protein family. In terms of assembly, interacts with host CUL1 and CUL4A; these interactions inhibit the E3 ligase activity of cullins. Interacts with inner tegument protein. Interacts with capsid vertex specific component CVC2. Interacts with the major capsid protein/MCP.

It localises to the virion tegument. Its subcellular location is the host cytoplasm. The protein localises to the host nucleus. The enzyme catalyses Thiol-dependent hydrolysis of ester, thioester, amide, peptide and isopeptide bonds formed by the C-terminal Gly of ubiquitin (a 76-residue protein attached to proteins as an intracellular targeting signal).. Functionally, large tegument protein that plays multiple roles in the viral cycle. During viral entry, remains associated with the capsid while most of the tegument is detached and participates in the capsid transport toward the host nucleus. Plays a role in the routing of the capsid at the nuclear pore complex and subsequent uncoating. Within the host nucleus, acts as a deneddylase and promotes the degradation of nuclear CRLs (cullin-RING ubiquitin ligases) and thereby stabilizes nuclear CRL substrates, while cytoplasmic CRLs remain unaffected. These modifications prevent host cell cycle S-phase progression and create a favorable environment allowing efficient viral genome replication. Participates later in the secondary envelopment of capsids. Indeed, plays a linker role for the association of the outer viral tegument to the capsids together with the inner tegument protein. This chain is Large tegument protein deneddylase (UL36), found in Amazona oratrix (yellow-headed parrot).